The sequence spans 205 residues: Large ribosomal subunit protein uL4 (205 aa).

Positions 43–95 (RSGNRAQKDRAEVKHSTKKPWRQKGTGRARAGMTSSPLWRGGGRAFPNSPEEN) are disordered. The span at 48–57 (AQKDRAEVKH) shows a compositional bias: basic and acidic residues. Residues 58-69 (STKKPWRQKGTG) show a composition bias toward basic residues.

It belongs to the universal ribosomal protein uL4 family. As to quaternary structure, part of the 50S ribosomal subunit.

Its function is as follows. One of the primary rRNA binding proteins, this protein initially binds near the 5'-end of the 23S rRNA. It is important during the early stages of 50S assembly. It makes multiple contacts with different domains of the 23S rRNA in the assembled 50S subunit and ribosome. Functionally, forms part of the polypeptide exit tunnel. This Bordetella pertussis (strain Tohama I / ATCC BAA-589 / NCTC 13251) protein is Large ribosomal subunit protein uL4.